A 313-amino-acid polypeptide reads, in one-letter code: Glyoxylate/hydroxypyruvate reductase A (313 aa).

Residue Arg228 is part of the active site. The active-site Proton donor is His276.

Belongs to the D-isomer specific 2-hydroxyacid dehydrogenase family. GhrA subfamily.

The protein resides in the cytoplasm. It catalyses the reaction glycolate + NADP(+) = glyoxylate + NADPH + H(+). The enzyme catalyses (R)-glycerate + NAD(+) = 3-hydroxypyruvate + NADH + H(+). The catalysed reaction is (R)-glycerate + NADP(+) = 3-hydroxypyruvate + NADPH + H(+). In terms of biological role, catalyzes the NADPH-dependent reduction of glyoxylate and hydroxypyruvate into glycolate and glycerate, respectively. This Photorhabdus laumondii subsp. laumondii (strain DSM 15139 / CIP 105565 / TT01) (Photorhabdus luminescens subsp. laumondii) protein is Glyoxylate/hydroxypyruvate reductase A.